A 332-amino-acid chain; its full sequence is HTH-type transcriptional regulator RegA (332 aa).

The HTH lacI-type domain maps to 1-57 (MATSIKDVAREAGVSIATVSRVLNDIDVVNEDTKKKVLDAIKELGYRPNIVARSLKT). A DNA-binding region (H-T-H motif) is located at residues 5 to 24 (IKDVAREAGVSIATVSRVLN).

Functionally, involved in the regulation of amylase production. In Clostridium saccharobutylicum, this protein is HTH-type transcriptional regulator RegA (regA).